Here is a 484-residue protein sequence, read N- to C-terminus: Catalase (484 aa).

Met53 is modified (methionine sulfone). Residues His54 and Asn127 contribute to the active site. Residue Tyr337 coordinates heme.

As to quaternary structure, homotetramer. Heme serves as cofactor. Requires NADP(+) as cofactor.

The protein localises to the cytoplasm. The catalysed reaction is 2 H2O2 = O2 + 2 H2O. Decomposes hydrogen peroxide into water and oxygen; serves to protect cells from the toxic effects of hydrogen peroxide. The protein is Catalase (katA) of Proteus mirabilis.